Consider the following 471-residue polypeptide: Glutamate--tRNA ligase (471 aa).

A 'HIGH' region motif is present at residues 9–19; it reads PSPTGYLHVGG. 4 residues coordinate Zn(2+): C98, C100, C125, and H127. The short motif at 237 to 241 is the 'KMSKS' region element; it reads KLSKR. K240 contributes to the ATP binding site.

It belongs to the class-I aminoacyl-tRNA synthetase family. Glutamate--tRNA ligase type 1 subfamily. Monomer. Zn(2+) is required as a cofactor.

It localises to the cytoplasm. The enzyme catalyses tRNA(Glu) + L-glutamate + ATP = L-glutamyl-tRNA(Glu) + AMP + diphosphate. In terms of biological role, catalyzes the attachment of glutamate to tRNA(Glu) in a two-step reaction: glutamate is first activated by ATP to form Glu-AMP and then transferred to the acceptor end of tRNA(Glu). This Shigella sonnei (strain Ss046) protein is Glutamate--tRNA ligase.